A 513-amino-acid polypeptide reads, in one-letter code: Histidine ammonia-lyase (513 aa).

Residues 146 to 148 (ASG) constitute a cross-link (5-imidazolinone (Ala-Gly)). S147 carries the post-translational modification 2,3-didehydroalanine (Ser).

This sequence belongs to the PAL/histidase family. Contains an active site 4-methylidene-imidazol-5-one (MIO), which is formed autocatalytically by cyclization and dehydration of residues Ala-Ser-Gly.

Its subcellular location is the cytoplasm. It carries out the reaction L-histidine = trans-urocanate + NH4(+). Its pathway is amino-acid degradation; L-histidine degradation into L-glutamate; N-formimidoyl-L-glutamate from L-histidine: step 1/3. The protein is Histidine ammonia-lyase of Shewanella oneidensis (strain ATCC 700550 / JCM 31522 / CIP 106686 / LMG 19005 / NCIMB 14063 / MR-1).